Here is a 352-residue protein sequence, read N- to C-terminus: Quinolinate synthase (352 aa).

The iminosuccinate site is built by histidine 48 and serine 69. Cysteine 114 provides a ligand contact to [4Fe-4S] cluster. Iminosuccinate contacts are provided by residues 140 to 142 and serine 157; that span reads YAN. Cysteine 201 provides a ligand contact to [4Fe-4S] cluster. Residues 227-229 and threonine 244 contribute to the iminosuccinate site; that span reads HPE. Cysteine 298 lines the [4Fe-4S] cluster pocket.

This sequence belongs to the quinolinate synthase family. Type 1 subfamily. [4Fe-4S] cluster is required as a cofactor.

The protein resides in the cytoplasm. The enzyme catalyses iminosuccinate + dihydroxyacetone phosphate = quinolinate + phosphate + 2 H2O + H(+). It participates in cofactor biosynthesis; NAD(+) biosynthesis; quinolinate from iminoaspartate: step 1/1. In terms of biological role, catalyzes the condensation of iminoaspartate with dihydroxyacetone phosphate to form quinolinate. This Ectopseudomonas mendocina (strain ymp) (Pseudomonas mendocina) protein is Quinolinate synthase.